Reading from the N-terminus, the 286-residue chain is MAENKEEDVKLGANKFRETQPLGTAAQTDKDYKEPPPAPLFEPGELSSWSFYRAGIAEFMATFLFLYITILTVMGLKRSDSLCSSVGIQGVAWAFGGMIFALVYCTAGISGGHINPAVTFGLFLARKLSLTRAVFYMVMQCLGAICGAGVVKGFMVGPYQRLGGGANVVNPGYTKGDGLGAEIIGTFVLVYTVFSATDAKRNARDSHVPILAPLPIGFAVFLVHLATIPITGTGINPARSLGAAIIYNDEHAWNDHWIFWVGPMIGAALAAIYHQIIIRAMPFHRS.

Residues 1 to 35 (MAENKEEDVKLGANKFRETQPLGTAAQTDKDYKEP) are disordered. Residues 1–55 (MAENKEEDVKLGANKFRETQPLGTAAQTDKDYKEPPPAPLFEPGELSSWSFYRAG) are Cytoplasmic-facing. Over residues 7-18 (EDVKLGANKFRE) the composition is skewed to basic and acidic residues. The helical transmembrane segment at 56-76 (IAEFMATFLFLYITILTVMGL) threads the bilayer. At 77–89 (KRSDSLCSSVGIQ) the chain is on the extracellular side. Residues 90–110 (GVAWAFGGMIFALVYCTAGIS) traverse the membrane as a helical segment. The Cytoplasmic segment spans residues 111–133 (GGHINPAVTFGLFLARKLSLTRA). The short motif at 115–117 (NPA) is the NPA 1 element. The chain crosses the membrane as a helical span at residues 134–154 (VFYMVMQCLGAICGAGVVKGF). At 155 to 175 (MVGPYQRLGGGANVVNPGYTK) the chain is on the extracellular side. The chain crosses the membrane as a helical span at residues 176–196 (GDGLGAEIIGTFVLVYTVFSA). The Cytoplasmic portion of the chain corresponds to 197–209 (TDAKRNARDSHVP). Residues 210–230 (ILAPLPIGFAVFLVHLATIPI) traverse the membrane as a helical segment. Residues 231–257 (TGTGINPARSLGAAIIYNDEHAWNDHW) are Extracellular-facing. The NPA 2 motif lies at 236–238 (NPA). The chain crosses the membrane as a helical span at residues 258–278 (IFWVGPMIGAALAAIYHQIII). At 279–286 (RAMPFHRS) the chain is on the cytoplasmic side.

The protein belongs to the MIP/aquaporin (TC 1.A.8) family. PIP (TC 1.A.8.11) subfamily. As to expression, roots, ripening fruit and senescing leaves.

It is found in the cell membrane. In terms of biological role, aquaporins facilitate the transport of water and small neutral solutes across cell membranes. The protein is Probable aquaporin PIP-type pTOM75 of Solanum lycopersicum (Tomato).